The sequence spans 80 residues: Iota-conotoxin-like r11c (80 aa).

A signal peptide spans 1–19 (MKLCLTFLLVLMILASVTG). Positions 20-35 (EKSSKHTLSRAARVKN) are excised as a propeptide. 2 positions are modified to 4-hydroxyproline; partial: Pro-38 and Pro-47. Disulfide bonds link Cys-41-Cys-55, Cys-48-Cys-58, Cys-54-Cys-63, and Cys-57-Cys-72. Residue Pro-65 is modified to 4-hydroxyproline. Position 78 is a D-leucine (Leu-78). Arg-80 is a propeptide (removed by a carboxypeptidase).

The natural D-Leu form of the peptide is more potent than the synthetic L-Leu form. As to expression, expressed by the venom duct.

It localises to the secreted. In terms of biological role, iota-conotoxins bind to voltage-gated sodium channels (Nav) and act as agonists by shifting the voltage-dependence of activation to more hyperpolarized levels. Causes circular motion, convulsions, copious urination, rigid paralysis and death upon intracranial injection into mice. Causes unbalanced swimming, swimming in diagonal and vertical motion and death, when injected intraperitoneally into goldfish. L-Leu and D-Leu forms are active on both nerve and muscle. The sequence is that of Iota-conotoxin-like r11c from Conus radiatus (Rayed cone).